A 604-amino-acid polypeptide reads, in one-letter code: Baculoviral IAP repeat-containing protein 3 (604 aa).

The stretch at 29 to 96 (ELYRMSTYST…RNLYPSCSFI (68 aa)) is one BIR 1 repeat. The residue at position 130 (arginine 130) is an Omega-N-methylarginine. Serine 140 carries the phosphoserine modification. BIR repeat units lie at residues 169–235 (EEDR…CPFV) and 255–322 (LAAR…CEYL). 4 residues coordinate Zn(2+): cysteine 292, cysteine 295, histidine 312, and cysteine 319. The 91-residue stretch at 439–529 (RESDDVSLIR…MLYKRFFVQQ (91 aa)) folds into the CARD domain. The RING-type zinc-finger motif lies at 557–592 (CKVCMDKEVSIVFIPCGHLVVCRDCAPSLRKCPICR).

The protein belongs to the IAP family. As to quaternary structure, interacts with PRSS25; the interaction inhibits apoptotic suppressor activity. The BIR motifs region interacts with TNF receptor associated factors 1 and 2 (TRAF1 and TRAF2) to form a heteromeric complex, which is then recruited to the tumor necrosis factor receptor 2 (TNFR2). Interaction with TRAF2 is required for ubiquitination of IKBKE, degradation of NFKBIA and activation of NF-kappa-B. Interacts with RIP1, RIP2, RIP3, RIP4 and USP19. In terms of processing, auto-ubiquitinated and degraded by the proteasome in apoptotic cells.

It is found in the cytoplasm. The protein resides in the nucleus. It carries out the reaction S-ubiquitinyl-[E2 ubiquitin-conjugating enzyme]-L-cysteine + [acceptor protein]-L-lysine = [E2 ubiquitin-conjugating enzyme]-L-cysteine + N(6)-ubiquitinyl-[acceptor protein]-L-lysine.. With respect to regulation, USP19 regulates the stability of BIRC3/c-IAP2 by preventing its ubiquitination. Its function is as follows. Multi-functional protein which regulates not only caspases and apoptosis, but also modulates inflammatory signaling and immunity, mitogenic kinase signaling and cell proliferation, as well as cell invasion and metastasis. Acts as an E3 ubiquitin-protein ligase regulating NF-kappa-B signaling and regulates both canonical and non-canonical NF-kappa-B signaling by acting in opposite directions: acts as a positive regulator of the canonical pathway and suppresses constitutive activation of non-canonical NF-kappa-B signaling. The target proteins for its E3 ubiquitin-protein ligase activity include: RIPK1, RIPK2, RIPK3, RIPK4, CASP3, CASP7, CASP8, IKBKE, TRAF1, and BCL10. Acts as an important regulator of innate immune signaling via regulation of Toll-like receptors (TLRs), Nodlike receptors (NLRs) and RIG-I like receptors (RLRs), collectively referred to as pattern recognition receptors (PRRs). Protects cells from spontaneous formation of the ripoptosome, a large multi-protein complex that has the capability to kill cancer cells in a caspase-dependent and caspase-independent manner. Suppresses ripoptosome formation by ubiquitinating RIPK1 and CASP8. This Canis lupus familiaris (Dog) protein is Baculoviral IAP repeat-containing protein 3 (BIRC3).